A 348-amino-acid polypeptide reads, in one-letter code: GPALPP motifs-containing protein 1 (348 aa).

Disordered regions lie at residues 1 to 163 and 177 to 317; these read MARD…AKGP and QRMK…DLKV. Alanine 2 bears the N-acetylalanine mark. Residues 7 to 12 carry the GPALPP motif 1 motif; it reads GPALPP. Residues 14–27 are compositionally biased toward basic and acidic residues; sequence FKERATVEDQERDP. Serine 28 is modified (phosphoserine). The GPALPP motif 2 motif lies at 32–37; sequence GPALPP. The span at 41-59 shows a compositional bias: low complexity; that stretch reads SSSSDSSDSNEDSSSLSEE. The segment covering 60-69 has biased composition (acidic residues); that stretch reads GNQESEEDDA. A GPALPP motif 3 motif is present at residues 93–98; the sequence is GPALPP. Serine 106 carries the phosphoserine modification. Positions 108–117 are enriched in pro residues; the sequence is PRPIIGPALP. The GPALPP motif 4 motif lies at 113-118; that stretch reads GPALPP. 3 positions are modified to phosphoserine: serine 138, serine 143, and serine 148. Residues 144 to 154 show a composition bias toward acidic residues; the sequence is EEAESGEDEDI. Composition is skewed to basic and acidic residues over residues 177-195, 235-269, 277-287, and 295-317; these read QRMKEKLTKGDDDSPKPVT, PADRERKAKEIQEARKSLSKKDEENMLSGRDKRLA, ESKRSESLMDI, and KAAEDKNRHQERTPFDRDKDLKV. Glycyl lysine isopeptide (Lys-Gly) (interchain with G-Cter in SUMO2) cross-links involve residues lysine 279 and lysine 316.

In Rattus norvegicus (Rat), this protein is GPALPP motifs-containing protein 1 (Gpalpp1).